We begin with the raw amino-acid sequence, 424 residues long: Histidine--tRNA ligase (424 aa).

This sequence belongs to the class-II aminoacyl-tRNA synthetase family. Homodimer.

The protein resides in the cytoplasm. It carries out the reaction tRNA(His) + L-histidine + ATP = L-histidyl-tRNA(His) + AMP + diphosphate + H(+). This Shewanella sediminis (strain HAW-EB3) protein is Histidine--tRNA ligase.